The chain runs to 144 residues: Transcription antitermination protein NusB (144 aa).

Belongs to the NusB family.

Involved in transcription antitermination. Required for transcription of ribosomal RNA (rRNA) genes. Binds specifically to the boxA antiterminator sequence of the ribosomal RNA (rrn) operons. This is Transcription antitermination protein NusB from Haemophilus influenzae (strain 86-028NP).